We begin with the raw amino-acid sequence, 452 residues long: Phosphoglucosamine mutase (452 aa).

Catalysis depends on Ser101, which acts as the Phosphoserine intermediate. Mg(2+) contacts are provided by Ser101, Asp241, Asp243, and Asp245. Phosphoserine is present on Ser101.

Belongs to the phosphohexose mutase family. The cofactor is Mg(2+). Activated by phosphorylation.

The enzyme catalyses alpha-D-glucosamine 1-phosphate = D-glucosamine 6-phosphate. Functionally, catalyzes the conversion of glucosamine-6-phosphate to glucosamine-1-phosphate. This chain is Phosphoglucosamine mutase, found in Lactococcus lactis subsp. cremoris (strain SK11).